Reading from the N-terminus, the 298-residue chain is Protein BZR1 homolog 1 (298 aa).

Disordered stretches follow at residues 1-25 (MTSG…RRER), 71-129 (GTTY…SPSR), 153-175 (VSSS…PKIR), and 190-217 (AVSA…ESDV). The interval 10–91 (RTPTWKEREN…PSSAGGASVG (82 aa)) is required for DNA-binding. Residues 96–128 (SSTQLLSAPSSSFPSPVPSYHASPASSSFPSPS) are compositionally biased toward low complexity. Serine 156 carries the post-translational modification Phosphoserine. Residues 204–224 (EHPDTIPECDESDVSTVDSGR) are PEST-like.

Belongs to the BZR/LAT61 family. As to quaternary structure, interacts with GF14C. Interacts with PUB24. Interacts with SMOS1. In terms of processing, phosphorylated on serine and threonine residues by GSK2. Dephosphorylated during response to brassinosteroid. Ubiquitinated by PUB24. Ubiquitination leads to its subsequent degradation by the 26S proteasome, thus reducing sensitivity to brassinosteroid signaling.

It is found in the nucleus. It localises to the cytoplasm. In terms of biological role, positive brassinosteroid-signaling protein. Mediates downstream brassinosteroid-regulated growth response and feedback inhibition of brassinosteroid (BR) biosynthetic genes. May act as transcriptional repressor by binding the brassinosteroid-response element (BREE) (5'-CGTG(T/C)G-3') in the promoter of DLT (AC Q9LWU9), another positive regulator of BR signaling. Acts as a transcriptional repressor of LIC, a negative regulator of BR signaling, by binding to the BRRE element of its promoter. BZR1 and LIC play opposite roles in BR signaling and regulation of leaf bending. This is Protein BZR1 homolog 1 from Oryza sativa subsp. japonica (Rice).